A 133-amino-acid chain; its full sequence is Small ribosomal subunit protein eS8 (133 aa).

The tract at residues 1-22 is disordered; it reads MGFYQGPDNRKITGGLKGKHRD.

The protein belongs to the eukaryotic ribosomal protein eS8 family. In terms of assembly, part of the 30S ribosomal subunit.

The sequence is that of Small ribosomal subunit protein eS8 from Saccharolobus islandicus (strain M.14.25 / Kamchatka #1) (Sulfolobus islandicus).